The primary structure comprises 360 residues: MAQLSLQHIQKIYDNQVHVVKDFNLEIVDKEFIVFVGPSGCGKSTTLRMIAGLEEISGGDLLIDGKRMNDVPAKARNIAMVFQNYALYPHMTVYDNMAFGLKMQKIAREVIDERVNWAAQILGLREYLKRKPGALSGGQRQRVALGRAIVREAGVFLMDEPLSNLDAKLRVQMRAEISKLHQKLNTTMIYVTHDQTEAMTMATRIVIMKDGIVQQVGAPKTVYNQPANMFVAGFIGSPAMNFIRGTIDGDKFVTETLKLTIPEEKLAVLKTQESLHKPIVMGIRPEDIHPDAQEENNISAKISVAELTGAEFMLYTTVGGHELVVRAGALNDYHAGENITIHFDMTKCHFFDAETEIAIC.

This is an uncharacterized protein from Escherichia coli (strain UTI89 / UPEC).